The sequence spans 841 residues: Chitin synthase 1 (841 aa).

Basic and acidic residues predominate over residues 1-13; that stretch reads MNPGQKQEHDQYP. Residues 1–98 form a disordered region; sequence MNPGQKQEHD…YGEAPRRQPR (98 aa). Residues 76-85 show a composition bias toward pro residues; it reads PPQPMGPPSP. 9 helical membrane passes run 302 to 322, 385 to 405, 526 to 546, 564 to 584, 602 to 622, 644 to 664, 673 to 693, 778 to 798, and 816 to 836; these read WFFQAFGPVINPNVCVLIDVG, SVFGYISVLPGAFSAYRFTAL, LIFSWFALGNFYLTFYILTSA, ILHTILNYIYILLIIVQFILA, FFAILMVYMMFATIWITVVGV, NIIISIVSTYAMYFIASFLFF, FIQYIFLSPSYTNILNIYAFC, VISWIISNLILVVLITNENIL, and LWSVAGLSAIRFCGSGLYLIF.

This sequence belongs to the chitin synthase family.

Its subcellular location is the cell membrane. It catalyses the reaction [(1-&gt;4)-N-acetyl-beta-D-glucosaminyl](n) + UDP-N-acetyl-alpha-D-glucosamine = [(1-&gt;4)-N-acetyl-beta-D-glucosaminyl](n+1) + UDP + H(+). Functionally, polymerizes chitin, a structural polymer of the cell wall and septum, by transferring the sugar moiety of UDP-GlcNAc to the non-reducing end of the growing chitin polymer. The sequence is that of Chitin synthase 1 (chs1) from Phycomyces blakesleeanus (strain ATCC 8743b / DSM 1359 / FGSC 10004 / NBRC 33097 / NRRL 1555).